Consider the following 135-residue polypeptide: MQSSSPSTSHCSQIPIKIQHHIAKKRQVRRRRVDLDCGCSYYIHLDCINHGFTHRGVHHCASSNEWRLYLRDNKSPIFHDNQTQSEPIQQQIQHTNIPNQIQPQLEEGTGDSQMFSQLPHLDDLTVSDWSFFKSL.

A Nuclear localization signal motif is present at residues 17–32 (KIQHHIAKKRQVRRRR). Residues 37-54 (CGCSYYIHLDCINHGFTH) fold into a zinc finger. Residues 120 to 135 (HLDDLTVSDWSFFKSL) are transactivation.

It belongs to the geminiviridae transcriptional activator protein family. In terms of assembly, monomer. Homodimer. Homooligomer. Self-interaction correlates with nuclear localization and efficient activation of transcription. Monomers suppress local silencing by interacting with and inactivating host adenosine kinase 2 (ADK2) in the cytoplasm. Interacts with and inhibits host SNF1 kinase. Binds to ssDNA. May interact with host RPS27A. Phosphorylated.

The protein localises to the host nucleus. It is found in the host cytoplasm. Its function is as follows. Multifunctional protein that modulates host antiviral defenses and promotes host attractiveness to insect vectors. Acts as a suppressor of RNA-mediated gene silencing, also known as post-transcriptional gene silencing (PTGS), a mechanism of plant viral defense that limits the accumulation of viral RNAs. TrAP suppresses the host RNA silencing by inhibiting adenosine kinase 2 (ADK2), a kinase involved in a general methylation pathway. Also suppresses the host basal defense by interacting with and inhibiting SNF1 kinase, a key regulator of cell metabolism implicated in innate antiviral defense. Inhibits signal transduction by the phytohormone jasmonate, making the infected plant more attractive to aphids, which are the second host to play a role as a dissemination vector. Acts by binding to ubiquitin precursor RPS27A, thereby preventing ubiquitin degradation of JAZ. In Capsicum annuum (Capsicum pepper), this protein is Transcriptional activator protein.